The primary structure comprises 97 residues: uncharacterized protein (97 aa).

This is an uncharacterized protein from Methanothermococcus thermolithotrophicus (Methanococcus thermolithotrophicus).